A 136-amino-acid chain; its full sequence is S-protein homolog 25 (136 aa).

Residues 1–20 form the signal peptide; the sequence is MNHSVFVILITITYFGLNQA. N-linked (GlcNAc...) asparagine glycosylation is found at N71 and N84.

It belongs to the plant self-incompatibility (S1) protein family.

Its subcellular location is the secreted. This is S-protein homolog 25 from Arabidopsis thaliana (Mouse-ear cress).